The following is a 270-amino-acid chain: tRNA pseudouridine synthase A (270 aa).

Asp-60 (nucleophile) is an active-site residue. The segment at 107–111 (FHARF) is RNA binding. Tyr-118 contributes to the substrate binding site. Residues 168-172 (QCQSR) are interaction with tRNA.

This sequence belongs to the tRNA pseudouridine synthase TruA family. As to quaternary structure, homodimer.

It catalyses the reaction uridine(38/39/40) in tRNA = pseudouridine(38/39/40) in tRNA. Its function is as follows. Formation of pseudouridine at positions 38, 39 and 40 in the anticodon stem and loop of transfer RNAs. This is tRNA pseudouridine synthase A from Shigella boydii serotype 18 (strain CDC 3083-94 / BS512).